Consider the following 470-residue polypeptide: Sorting nexin-17 (470 aa).

The 109-residue stretch at 1–109 (MHFSIPETES…SFLRRAQQET (109 aa)) folds into the PX domain. Positions 36, 38, 62, and 75 each coordinate a 1,2-diacyl-sn-glycero-3-phospho-(1D-myo-inositol-3-phosphate). In terms of domain architecture, Ras-associating spans 115-206 (EEVSLEVLLS…YKIVLRKSYW (92 aa)). Positions 115–432 (EEVSLEVLLS…DASRESMVKL (318 aa)) are FERM-like. A PTB-like F3 module region spans residues 270 to 432 (GYLRFDACVA…DASRESMVKL (163 aa)). The interval 401–425 (GGNLRRSDSQQAVKSPPLLESPDAS) is disordered. A phosphoserine mark is found at Ser407, Ser409, Ser415, Ser421, Ser437, and Ser440.

The protein belongs to the sorting nexin family. As to quaternary structure, monomer. Interacts with APP (via cytoplasmic YXNPXY motif). Interacts with KIF1B. Interacts with the C-termini of P-selectin, PTC, LDLR, VLDLR, LRP1 and LRP8. Interacts with KRIT1 (via N-terminus). Interacts with HRAS. Interacts with ITGB1 and ITGB5 (via NPxY motif). Interacts with CCDC22 and CCDC93; the interaction associates SNX17 with the CCC complex. Interacts (via C-terminus) with VPS26C and VPS35L; the interactions are direct and associate SNX17 with the retriever complex.

The protein resides in the cytoplasm. It localises to the early endosome. It is found in the cytoplasmic vesicle membrane. Functionally, critical regulator of endosomal recycling of numerous surface proteins, including integrins, signaling receptor and channels. Binds to NPxY sequences in the cytoplasmic tails of target cargos. Associates with retriever and CCC complexes to prevent lysosomal degradation and promote cell surface recycling of numerous cargos such as integrins ITGB1, ITGB5 and their associated alpha subunits. Also required for maintenance of normal cell surface levels of APP and LRP1. Interacts with membranes containing phosphatidylinositol 3-phosphate (PtdIns(3P)). This is Sorting nexin-17 (Snx17) from Rattus norvegicus (Rat).